Reading from the N-terminus, the 1357-residue chain is DNA-directed RNA polymerase subunit beta (1357 aa).

It belongs to the RNA polymerase beta chain family. In terms of assembly, the RNAP catalytic core consists of 2 alpha, 1 beta, 1 beta' and 1 omega subunit. When a sigma factor is associated with the core the holoenzyme is formed, which can initiate transcription.

The enzyme catalyses RNA(n) + a ribonucleoside 5'-triphosphate = RNA(n+1) + diphosphate. Functionally, DNA-dependent RNA polymerase catalyzes the transcription of DNA into RNA using the four ribonucleoside triphosphates as substrates. In Nitrosomonas europaea (strain ATCC 19718 / CIP 103999 / KCTC 2705 / NBRC 14298), this protein is DNA-directed RNA polymerase subunit beta.